The primary structure comprises 66 residues: U1-theraphotoxin-Cg1d 1 (66 aa).

The N-terminal stretch at 1–21 is a signal peptide; the sequence is MKMSALFVIFGLALLFCNSFA. Residues 22-29 constitute a propeptide that is removed on maturation; it reads AELKATGR. Disulfide bonds link cysteine 31–cysteine 46, cysteine 38–cysteine 51, and cysteine 45–cysteine 58. Proline 63 carries the proline amide modification.

This sequence belongs to the neurotoxin 10 (Hwtx-1) family. 46 (Jztx-7/10/12) subfamily. Expressed by the venom gland.

The protein resides in the secreted. Probable ion channel inhibitor. In Chilobrachys guangxiensis (Chinese earth tiger tarantula), this protein is U1-theraphotoxin-Cg1d 1.